A 249-amino-acid chain; its full sequence is Exosome complex component Rrp41 (249 aa).

This sequence belongs to the RNase PH family. Rrp41 subfamily. Component of the archaeal exosome complex. Forms a hexameric ring-like arrangement composed of 3 Rrp41-Rrp42 heterodimers. The hexameric ring associates with a trimer of Rrp4 and/or Csl4 subunits.

It is found in the cytoplasm. Catalytic component of the exosome, which is a complex involved in RNA degradation. Has 3'-&gt;5' exoribonuclease activity. Can also synthesize heteromeric RNA-tails. The polypeptide is Exosome complex component Rrp41 (Thermococcus kodakarensis (strain ATCC BAA-918 / JCM 12380 / KOD1) (Pyrococcus kodakaraensis (strain KOD1))).